We begin with the raw amino-acid sequence, 315 residues long: Transaldolase (315 aa).

The active-site Schiff-base intermediate with substrate is Lys125.

Belongs to the transaldolase family. Type 1 subfamily. As to quaternary structure, homodimer.

Its subcellular location is the cytoplasm. It catalyses the reaction D-sedoheptulose 7-phosphate + D-glyceraldehyde 3-phosphate = D-erythrose 4-phosphate + beta-D-fructose 6-phosphate. It participates in carbohydrate degradation; pentose phosphate pathway; D-glyceraldehyde 3-phosphate and beta-D-fructose 6-phosphate from D-ribose 5-phosphate and D-xylulose 5-phosphate (non-oxidative stage): step 2/3. Its function is as follows. Transaldolase is important for the balance of metabolites in the pentose-phosphate pathway. This is Transaldolase from Polaromonas sp. (strain JS666 / ATCC BAA-500).